A 128-amino-acid chain; its full sequence is UPF0292 protein MJ1624 (128 aa).

Residues 23 to 105 form the Toprim domain; that stretch reads EKPIIVEGKR…KVNTKIRHEI (83 aa). Mg(2+) is bound by residues Glu-29, Asp-74, and Asp-76.

It belongs to the UPF0292 family. Mg(2+) serves as cofactor.

The sequence is that of UPF0292 protein MJ1624 from Methanocaldococcus jannaschii (strain ATCC 43067 / DSM 2661 / JAL-1 / JCM 10045 / NBRC 100440) (Methanococcus jannaschii).